A 137-amino-acid chain; its full sequence is Ribosome-binding factor A (137 aa).

Residues 112–137 (KKDEVKEDESHEDESTDHTEETNEEP) form a disordered region. Over residues 127–137 (TDHTEETNEEP) the composition is skewed to basic and acidic residues.

Belongs to the RbfA family. Monomer. Binds 30S ribosomal subunits, but not 50S ribosomal subunits or 70S ribosomes.

The protein localises to the cytoplasm. Its function is as follows. One of several proteins that assist in the late maturation steps of the functional core of the 30S ribosomal subunit. Associates with free 30S ribosomal subunits (but not with 30S subunits that are part of 70S ribosomes or polysomes). Required for efficient processing of 16S rRNA. May interact with the 5'-terminal helix region of 16S rRNA. The sequence is that of Ribosome-binding factor A from Coprothermobacter proteolyticus (strain ATCC 35245 / DSM 5265 / OCM 4 / BT).